A 474-amino-acid polypeptide reads, in one-letter code: Bifunctional protein HldE (474 aa).

The ribokinase stretch occupies residues 1-317; sequence MKLSMPRFDR…RRAVQREQGS (317 aa). 194 to 197 is a binding site for ATP; the sequence is NLAE. Aspartate 263 is a catalytic residue. Positions 343–474 are cytidylyltransferase; it reads FTNGCFDILH…GIVEKIRRQP (132 aa).

This sequence in the N-terminal section; belongs to the carbohydrate kinase PfkB family. In the C-terminal section; belongs to the cytidylyltransferase family. In terms of assembly, homodimer.

It carries out the reaction D-glycero-beta-D-manno-heptose 7-phosphate + ATP = D-glycero-beta-D-manno-heptose 1,7-bisphosphate + ADP + H(+). The enzyme catalyses D-glycero-beta-D-manno-heptose 1-phosphate + ATP + H(+) = ADP-D-glycero-beta-D-manno-heptose + diphosphate. The protein operates within nucleotide-sugar biosynthesis; ADP-L-glycero-beta-D-manno-heptose biosynthesis; ADP-L-glycero-beta-D-manno-heptose from D-glycero-beta-D-manno-heptose 7-phosphate: step 1/4. Its pathway is nucleotide-sugar biosynthesis; ADP-L-glycero-beta-D-manno-heptose biosynthesis; ADP-L-glycero-beta-D-manno-heptose from D-glycero-beta-D-manno-heptose 7-phosphate: step 3/4. Functionally, catalyzes the phosphorylation of D-glycero-D-manno-heptose 7-phosphate at the C-1 position to selectively form D-glycero-beta-D-manno-heptose-1,7-bisphosphate. In terms of biological role, catalyzes the ADP transfer from ATP to D-glycero-beta-D-manno-heptose 1-phosphate, yielding ADP-D-glycero-beta-D-manno-heptose. This chain is Bifunctional protein HldE, found in Azotobacter vinelandii (strain DJ / ATCC BAA-1303).